Reading from the N-terminus, the 486-residue chain is Probable transporter MCH1 (486 aa).

The Cytoplasmic segment spans residues 1-29; that stretch reads MPLSKVEHYLSYHTRLLLPHVLSLQSSHR. Residues 30-50 traverse the membrane as a helical segment; the sequence is VAYIFSLLSAVSTGFITLISL. At 51–67 the chain is on the vacuolar side; the sequence is YSQPWQKHLNYSSWQIN. Asn-60 carries N-linked (GlcNAc...) asparagine glycosylation. A helical membrane pass occupies residues 68–88; that stretch reads TIASMTNLGMYLTPPILGMIA. The Cytoplasmic portion of the chain corresponds to 89 to 93; that stretch reads DSHGP. The chain crosses the membrane as a helical span at residues 94–114; it reads ITLSLLAIIGFIPSYSYLAYV. The Vacuolar portion of the chain corresponds to 115-133; that stretch reads FNHPELSLGGNGDSSFNLS. The N-linked (GlcNAc...) asparagine glycan is linked to Asn-131. A helical transmembrane segment spans residues 134-154; that stretch reads IICFVFIGISTSALYFSALLT. At 155–163 the chain is on the cytoplasmic side; it reads CTKLYPHTK. Residues 164–184 form a helical membrane-spanning segment; it reads LLSISLPTTCYGISSVVGSQL. Topologically, residues 185–212 are vacuolar; sequence LRIKWFWSSNASSSSSNSDLNLGRVFQT. N-linked (GlcNAc...) asparagine glycosylation occurs at Asn-194. A helical membrane pass occupies residues 213 to 233; the sequence is FALVYVVIGLLAWIATSVVSL. Residues 234 to 279 are Cytoplasmic-facing; that stretch reads LHFNEEQDNQKRLDDQTDVEQSPLLERSNHVQEKFTQTMLRIFSDP. Residue Ser-255 is modified to Phosphoserine. A helical transmembrane segment spans residues 280-300; it reads VTYILAVSILLSLGPLEMFIA. Residues 301–320 lie on the Vacuolar side of the membrane; sequence NMGSLTNLLVQLDAPTLSTK. A helical transmembrane segment spans residues 321 to 343; the sequence is LLSTYALSSTFTRLLTGIVADFF. At 344 to 347 the chain is on the cytoplasmic side; that stretch reads AKKK. A helical transmembrane segment spans residues 348 to 368; it reads ISIKWILLTFLSLGVCAQLFL. Residues 369–385 lie on the Vacuolar side of the membrane; sequence LKMTSSASPWGLVPTGS. The chain crosses the membrane as a helical span at residues 386 to 406; it reads LVGIVYGGLFTVYPTLVLLVW. Residues 407–413 are Cytoplasmic-facing; sequence GERSFGT. A helical transmembrane segment spans residues 414-434; that stretch reads VYGSLLIAPAIGSMIFCMLYA. Residues 435–456 are Vacuolar-facing; that stretch reads KFYDSRCMSGGGDLRNPSCISA. The helical transmembrane segment at 457 to 477 threads the bilayer; it reads VYKYSSIAFVVSAVLSAVVFW. At 478 to 486 the chain is on the cytoplasmic side; the sequence is KLKSRKLRI.

This sequence belongs to the major facilitator superfamily.

Its subcellular location is the vacuole membrane. Functionally, probable transporter. Does not act in the transport of monocarboxylic acids across the plasma membrane. The protein is Probable transporter MCH1 (MCH1) of Saccharomyces cerevisiae (strain ATCC 204508 / S288c) (Baker's yeast).